The primary structure comprises 123 residues: Small ribosomal subunit protein uS12 (123 aa).

Asp-89 carries the 3-methylthioaspartic acid modification.

Belongs to the universal ribosomal protein uS12 family. In terms of assembly, part of the 30S ribosomal subunit. Contacts proteins S8 and S17. May interact with IF1 in the 30S initiation complex.

Its function is as follows. With S4 and S5 plays an important role in translational accuracy. Interacts with and stabilizes bases of the 16S rRNA that are involved in tRNA selection in the A site and with the mRNA backbone. Located at the interface of the 30S and 50S subunits, it traverses the body of the 30S subunit contacting proteins on the other side and probably holding the rRNA structure together. The combined cluster of proteins S8, S12 and S17 appears to hold together the shoulder and platform of the 30S subunit. This is Small ribosomal subunit protein uS12 from Bradyrhizobium diazoefficiens (strain JCM 10833 / BCRC 13528 / IAM 13628 / NBRC 14792 / USDA 110).